The primary structure comprises 478 residues: MTKAEFSLVLPEVLLAIYAMGVLLFGVWTGKDRVAKPILWASAVTMLALALIIGLGTGNDTAFGGLFIADGFARFSKVVILVSAAAVLAMSSDYMGRRGLLRFEYPILIVLAVVGMMMMVSAGDLMSLYIGLELQSLALYVVAALRRDSAVSSEAGLKYFVLGSLSSGLLLYGASLVYGFAGTTTFSGIITVVEQGHLPIGLLFGLVFLLAGLAFKVSAVPFHMWTPDVYEGSPTPVTAFFATAPKLAAMALIARVVHDAFGQVPGEWGQILAALALASMYLGAIAGIGQRDIKRLMAYSSISHMGFGLLGLAAGTAAGVESMLLYMTIYIVMNVGTFAFILSMERDGKPVTEIAALNMLSKTDPVKAFALLVLLFSLAGVPPMLGFFAKFAVIKAAIGAGFVWVPVAAVVASVIGAFYYLRIVYFMYFGEKSAPLDGRMPALQFAFLVLAAVAMLGGAINMAGVEGAAQAAAASLVN.

The next 13 membrane-spanning stretches (helical) occupy residues 8–28 (LVLP…FGVW), 38–58 (ILWA…LGTG), 62–82 (AFGG…VILV), 106–126 (PILI…GDLM), 160–180 (FVLG…VYGF), 200–220 (IGLL…VSAV), 234–254 (PTPV…ALIA), 268–288 (WGQI…IAGI), 300–320 (SSIS…AAGV), 322–342 (SMLL…AFIL), 368–388 (AFAL…LGFF), 398–418 (IGAG…IGAF), and 445–465 (FAFL…MAGV).

It belongs to the complex I subunit 2 family. As to quaternary structure, NDH-1 is composed of 14 different subunits. Subunits NuoA, H, J, K, L, M, N constitute the membrane sector of the complex.

It localises to the cellular chromatophore membrane. The catalysed reaction is a quinone + NADH + 5 H(+)(in) = a quinol + NAD(+) + 4 H(+)(out). Functionally, NDH-1 shuttles electrons from NADH, via FMN and iron-sulfur (Fe-S) centers, to quinones in the respiratory chain. The immediate electron acceptor for the enzyme in this species is believed to be ubiquinone. Couples the redox reaction to proton translocation (for every two electrons transferred, four hydrogen ions are translocated across the cytoplasmic membrane), and thus conserves the redox energy in a proton gradient. The chain is NADH-quinone oxidoreductase subunit N from Rhodobacter capsulatus (Rhodopseudomonas capsulata).